The primary structure comprises 488 residues: Proline--tRNA ligase (488 aa).

Belongs to the class-II aminoacyl-tRNA synthetase family. ProS type 3 subfamily. Homodimer.

The protein localises to the cytoplasm. It carries out the reaction tRNA(Pro) + L-proline + ATP = L-prolyl-tRNA(Pro) + AMP + diphosphate. In terms of biological role, catalyzes the attachment of proline to tRNA(Pro) in a two-step reaction: proline is first activated by ATP to form Pro-AMP and then transferred to the acceptor end of tRNA(Pro). Can inadvertently accommodate and process cysteine. In Borreliella burgdorferi (strain ATCC 35210 / DSM 4680 / CIP 102532 / B31) (Borrelia burgdorferi), this protein is Proline--tRNA ligase (proS).